The following is a 189-amino-acid chain: Mu-like prophage FluMu protein gp27 (189 aa).

This sequence to phage Mu protein gp27.

This chain is Mu-like prophage FluMu protein gp27, found in Haemophilus influenzae (strain ATCC 51907 / DSM 11121 / KW20 / Rd).